We begin with the raw amino-acid sequence, 358 residues long: Peptide chain release factor 1 (358 aa).

Gln232 is subject to N5-methylglutamine.

This sequence belongs to the prokaryotic/mitochondrial release factor family. Post-translationally, methylated by PrmC. Methylation increases the termination efficiency of RF1.

Its subcellular location is the cytoplasm. Functionally, peptide chain release factor 1 directs the termination of translation in response to the peptide chain termination codons UAG and UAA. This Acidobacterium capsulatum (strain ATCC 51196 / DSM 11244 / BCRC 80197 / JCM 7670 / NBRC 15755 / NCIMB 13165 / 161) protein is Peptide chain release factor 1.